The chain runs to 264 residues: Thymidylate synthase (264 aa).

Arg21 is a dUMP binding site. His51 contacts (6R)-5,10-methylene-5,6,7,8-tetrahydrofolate. 126-127 (RR) contacts dUMP. The active-site Nucleophile is the Cys146. DUMP is bound by residues 166–169 (RSAD), Asn177, and 207–209 (HIY). Asp169 lines the (6R)-5,10-methylene-5,6,7,8-tetrahydrofolate pocket. Ala263 contributes to the (6R)-5,10-methylene-5,6,7,8-tetrahydrofolate binding site.

This sequence belongs to the thymidylate synthase family. Bacterial-type ThyA subfamily. Homodimer.

The protein localises to the cytoplasm. The enzyme catalyses dUMP + (6R)-5,10-methylene-5,6,7,8-tetrahydrofolate = 7,8-dihydrofolate + dTMP. The protein operates within pyrimidine metabolism; dTTP biosynthesis. Functionally, catalyzes the reductive methylation of 2'-deoxyuridine-5'-monophosphate (dUMP) to 2'-deoxythymidine-5'-monophosphate (dTMP) while utilizing 5,10-methylenetetrahydrofolate (mTHF) as the methyl donor and reductant in the reaction, yielding dihydrofolate (DHF) as a by-product. This enzymatic reaction provides an intracellular de novo source of dTMP, an essential precursor for DNA biosynthesis. The chain is Thymidylate synthase from Vesicomyosocius okutanii subsp. Calyptogena okutanii (strain HA).